The chain runs to 315 residues: Olfactory receptor 10H2 (315 aa).

Over 1–25 (MLGLNHTSMSEFILVGFSAFPHLQL) the chain is Extracellular. The N-linked (GlcNAc...) asparagine glycan is linked to Asn-5. A helical membrane pass occupies residues 26-46 (MLFLLFLLMYLFTLLGNLLIM). Over 47–54 (ATVWSERS) the chain is Cytoplasmic. The chain crosses the membrane as a helical span at residues 55–75 (LHTPMYLFLCVLSVSEILYTV). Residues 76 to 99 (AIIPRMLADLLSTQRSIAFLACAS) are Extracellular-facing. Cys-97 and Cys-189 form a disulfide bridge. Residues 100–120 (QMFFSFSFGFTHSFLLTVMGY) traverse the membrane as a helical segment. Over 121–139 (DRYVAICHPLRYNVLMSPR) the chain is Cytoplasmic. Residues 140–160 (GCACLVGCSWAGGSVMGMVVT) traverse the membrane as a helical segment. Over 161-197 (SAIFQLTFCGSHEIQHFLCHVPPLLKLACGNNVPAVA) the chain is Extracellular. The chain crosses the membrane as a helical span at residues 198-218 (LGVGLVCIMALLGCFLLILLS). The Cytoplasmic portion of the chain corresponds to 219–238 (YAFIVADILKIPSAEGRNKA). Residues 239-259 (FSTCASHLIVVIVHYGFASVI) traverse the membrane as a helical segment. Residues 260-272 (YLKPKGPHSQEGD) are Extracellular-facing. A helical membrane pass occupies residues 273–293 (TLMATTYAVLTPFLSPIIFSL). The Cytoplasmic segment spans residues 294-315 (RNKELKVAMKRTFLSTLYSSGT).

Belongs to the G-protein coupled receptor 1 family.

The protein localises to the cell membrane. In terms of biological role, odorant receptor. In Homo sapiens (Human), this protein is Olfactory receptor 10H2 (OR10H2).